The chain runs to 708 residues: WD repeat-containing and planar cell polarity effector protein fritz homolog (708 aa).

2 WD repeats span residues 303 to 342 (PLRS…TLLA) and 343 to 382 (QADL…IRAQ).

The protein belongs to the WD repeat fritz family. As to quaternary structure, interacts with sept2-a. Interacts with intu and fuz; fuz, intu and wdpcp probably form the core CPLANE (ciliogenesis and planar polarity effectors) complex.

The protein resides in the cell membrane. It is found in the cytoplasm. The protein localises to the cytoskeleton. Its subcellular location is the cilium axoneme. It localises to the cilium basal body. Probable effector of the planar cell polarity signaling pathway which regulates the septin cytoskeleton in both ciliogenesis and collective cell movements including covergent extension during gastrulation. Controls cell shape but not polarization during convergent extension. Proposed to function as core component of the CPLANE (ciliogenesis and planar polarity effectors) complex involved in the recruitment of peripheral IFT-A proteins to basal bodies. This Xenopus laevis (African clawed frog) protein is WD repeat-containing and planar cell polarity effector protein fritz homolog (wdpcp).